A 1413-amino-acid chain; its full sequence is DNA-directed RNA polymerase subunit beta' (1413 aa).

Residues Cys70, Cys72, Cys85, and Cys88 each coordinate Zn(2+). Positions 460, 462, and 464 each coordinate Mg(2+). Cys819, Cys893, Cys900, and Cys903 together coordinate Zn(2+). Residues 1393-1413 (EAFEFGTPETPAAEQTPHTNE) are disordered.

This sequence belongs to the RNA polymerase beta' chain family. In terms of assembly, the RNAP catalytic core consists of 2 alpha, 1 beta, 1 beta' and 1 omega subunit. When a sigma factor is associated with the core the holoenzyme is formed, which can initiate transcription. Mg(2+) is required as a cofactor. It depends on Zn(2+) as a cofactor.

It catalyses the reaction RNA(n) + a ribonucleoside 5'-triphosphate = RNA(n+1) + diphosphate. DNA-dependent RNA polymerase catalyzes the transcription of DNA into RNA using the four ribonucleoside triphosphates as substrates. This Paraburkholderia phymatum (strain DSM 17167 / CIP 108236 / LMG 21445 / STM815) (Burkholderia phymatum) protein is DNA-directed RNA polymerase subunit beta'.